A 116-amino-acid polypeptide reads, in one-letter code: Protein Rev (116 aa).

Phosphoserine; by host CK2 is present on residues S5 and S8. The segment at 18 to 26 is homomultimerization; it reads LIKFLYQSN. A disordered region spans residues 23-49; that stretch reads YQSNPPPNPEGTRQARRNRRRRWRERQ. A Nuclear localization signal and RNA-binding (RRE) motif is present at residues 34-50; it reads TRQARRNRRRRWRERQR. A compositionally biased stretch (basic residues) spans 36 to 47; sequence QARRNRRRRWRE. The Nuclear export signal and binding to XPO1 signature appears at 73 to 84; that stretch reads LQLPPLERLTLD. Residues S92 and S99 each carry the phosphoserine; by host modification. Residues 92 to 116 are disordered; that stretch reads SGTQGVGSPQILVESPTVLESGTKE.

Belongs to the HIV-1 REV protein family. In terms of assembly, homomultimer; when bound to the RRE. Multimeric assembly is essential for activity and may involve XPO1. Binds to human KPNB1, XPO1, TNPO1, RANBP5 and IPO7. Interacts with the viral Integrase. Interacts with human KHDRBS1. Interacts with human NAP1; this interaction decreases Rev multimerization and stimulates its activity. Interacts with human DEAD-box helicases DDX3 and DDX24; these interactions may serve for viral RNA export to the cytoplasm and packaging, respectively. Interacts with human PSIP1; this interaction may inhibit HIV-1 DNA integration by promoting dissociation of the Integrase-LEDGF/p75 complex. In terms of processing, asymmetrically arginine dimethylated at one site by host PRMT6. Methylation impairs the RNA-binding activity and export of viral RNA from the nucleus to the cytoplasm. Phosphorylated by protein kinase CK2. Presence of, and maybe binding to the N-terminus of the regulatory beta subunit of CK2 is necessary for CK2-mediated Rev's phosphorylation.

The protein resides in the host nucleus. The protein localises to the host nucleolus. It is found in the host cytoplasm. Its function is as follows. Escorts unspliced or incompletely spliced viral pre-mRNAs (late transcripts) out of the nucleus of infected cells. These pre-mRNAs carry a recognition sequence called Rev responsive element (RRE) located in the env gene, that is not present in fully spliced viral mRNAs (early transcripts). This function is essential since most viral proteins are translated from unspliced or partially spliced pre-mRNAs which cannot exit the nucleus by the pathway used by fully processed cellular mRNAs. Rev itself is translated from a fully spliced mRNA that readily exits the nucleus. Rev's nuclear localization signal (NLS) binds directly to KPNB1/Importin beta-1 without previous binding to KPNA1/Importin alpha-1. KPNB1 binds to the GDP bound form of RAN (Ran-GDP) and targets Rev to the nucleus. In the nucleus, the conversion from Ran-GDP to Ran-GTP dissociates Rev from KPNB1 and allows Rev's binding to the RRE in viral pre-mRNAs. Rev multimerization on the RRE via cooperative assembly exposes its nuclear export signal (NES) to the surface. Rev can then form a complex with XPO1/CRM1 and Ran-GTP, leading to nuclear export of the complex. Conversion from Ran-GTP to Ran-GDP mediates dissociation of the Rev/RRE/XPO1/RAN complex, so that Rev can return to the nucleus for a subsequent round of export. Beside KPNB1, also seems to interact with TNPO1/Transportin-1, RANBP5/IPO5 and IPO7/RANBP7 for nuclear import. The nucleoporin-like HRB/RIP is an essential cofactor that probably indirectly interacts with Rev to release HIV RNAs from the perinuclear region to the cytoplasm. This chain is Protein Rev, found in Human immunodeficiency virus type 1 group M subtype B (isolate BRU/LAI) (HIV-1).